The chain runs to 327 residues: Protein hunchback (327 aa).

3 consecutive C2H2-type zinc fingers follow at residues 1–5 (HMRNH), 11–33 (FQCS…LKSH), and 39–63 (YRCA…KYQH). 3 disordered regions span residues 91–121 (KQKP…HPIF), 143–170 (PPNN…MSPP), and 182–290 (ERPL…EVAS). Basic and acidic residues-rich tracts occupy residues 205-216 (THREMPTEHGDD) and 265-276 (LQHEDEKMRDAD). C2H2-type zinc fingers lie at residues 297 to 319 (YTCQ…MGFH) and 325 to 327 (FMC).

It belongs to the hunchback C2H2-type zinc-finger protein family.

Its subcellular location is the nucleus. Functionally, gap class segmentation protein that controls development of head structures. The sequence is that of Protein hunchback (hb) from Manduca sexta (Tobacco hawkmoth).